A 422-amino-acid polypeptide reads, in one-letter code: Elongation factor 1-alpha (422 aa).

Residues 5–221 (KPHQNLAVIG…NDLPEPQPPT (217 aa)) enclose the tr-type G domain. Residues 14–21 (GHVDHGKS) form a G1 region. 14 to 21 (GHVDHGKS) serves as a coordination point for GTP. Position 21 (Ser21) interacts with Mg(2+). The tract at residues 70 to 74 (GVTID) is G2. Residues 91–94 (DCPG) form a G3 region. Residues 91-95 (DCPGH) and 146-149 (NKMD) each bind GTP. The interval 146–149 (NKMD) is G4. Residues 185–187 (SAF) are G5.

Belongs to the TRAFAC class translation factor GTPase superfamily. Classic translation factor GTPase family. EF-Tu/EF-1A subfamily.

The protein resides in the cytoplasm. The catalysed reaction is GTP + H2O = GDP + phosphate + H(+). Its function is as follows. GTP hydrolase that promotes the GTP-dependent binding of aminoacyl-tRNA to the A-site of ribosomes during protein biosynthesis. The chain is Elongation factor 1-alpha from Natronomonas pharaonis (strain ATCC 35678 / DSM 2160 / CIP 103997 / JCM 8858 / NBRC 14720 / NCIMB 2260 / Gabara) (Halobacterium pharaonis).